The chain runs to 548 residues: Natural resistance-associated macrophage protein 1 (548 aa).

A disordered region spans residues 1–38; the sequence is MSGDTGPPKQGGTRYGSISSPPSPEPQQAPPGGTYLSE. Residues 1–55 lie on the Cytoplasmic side of the membrane; the sequence is MSGDTGPPKQGGTRYGSISSPPSPEPQQAPPGGTYLSEKIPIPDTESGTFSLRKL. The chain crosses the membrane as a helical span at residues 56 to 73; it reads WAFTGPGFLMSIAFLDPG. The Extracellular portion of the chain corresponds to 74 to 82; it reads NIESDLQAG. The helical transmembrane segment at 83 to 102 threads the bilayer; the sequence is AVAGFKLLWVLLWATVLGLL. The Cytoplasmic portion of the chain corresponds to 103 to 139; it reads CQRLAARLGVVTGKDLGEVCHLYYPKVPRILLWLTIE. A helical transmembrane segment spans residues 140–160; the sequence is LAIVGSDMQEVIGTAIAFSLL. Over 161-164 the chain is Extracellular; it reads SAGR. A helical membrane pass occupies residues 165–184; it reads IPLWGGVLITIVDAFFFLFL. Residues 185 to 193 lie on the Cytoplasmic side of the membrane; sequence DNYGLRKLE. Residues 194–214 traverse the membrane as a helical segment; it reads AFFGFLITIMALTFGYEYVVA. Residues 215–237 lie on the Extracellular side of the membrane; that stretch reads QPAQGALLQGLFLPSCPGCGQPE. Residues 238-256 traverse the membrane as a helical segment; the sequence is LLQAVGIIGAIIMPHNIYL. At 257-284 the chain is on the cytoplasmic side; the sequence is HSSLVKSREVDRSRRADIREANMYFLIE. The helical transmembrane segment at 285 to 304 threads the bilayer; sequence ATIALSVSFLINLFVMAVFG. At 305–346 the chain is on the extracellular side; the sequence is QAFYKQTNQAAFNICANSSLQDYAPIFPRNNLTVAVDIYQGG. N-linked (GlcNAc...) asparagine glycans are attached at residues N321 and N335. Residues 347–366 traverse the membrane as a helical segment; the sequence is VILGCLFGPAALYIWAVGLL. At 367–397 the chain is on the cytoplasmic side; it reads AAGQSSTMTGTYAGQFVMEGFLKLRWSRFAR. Residues 398 to 415 form a helical membrane-spanning segment; sequence VLLTRSCAILPTVLLAVF. Residues 416-426 are Extracellular-facing; that stretch reads RDLRDLSGLND. The helical transmembrane segment at 427 to 447 threads the bilayer; the sequence is LLNVLQSLLLPFAVLPILTFT. Residues 448–463 are Cytoplasmic-facing; it reads SMPALMREFANGLVSK. The chain crosses the membrane as a helical span at residues 464–485; sequence VITSSIMVLVCAVNLYFVISYV. Topologically, residues 486 to 493 are extracellular; the sequence is PSLPHPAY. The helical transmembrane segment at 494–513 threads the bilayer; that stretch reads FSLVALLAAAYLGLTTYLVW. Over 514 to 548 the chain is Cytoplasmic; the sequence is TCLITQGATLLAHSSHQRFLYGLPEEDQEKGRTSG.

Belongs to the NRAMP family.

It localises to the late endosome membrane. It is found in the lysosome membrane. It catalyses the reaction Zn(2+)(in) + H(+)(out) = Zn(2+)(out) + H(+)(in). It carries out the reaction Fe(2+)(in) + H(+)(out) = Fe(2+)(out) + H(+)(in). The enzyme catalyses Mn(2+)(in) + H(+)(out) = Mn(2+)(out) + H(+)(in). Its function is as follows. Macrophage-specific antiporter that fluxes metal ions in either direction against a proton gradient. Localized to late endosomal lysosomal membranes, delivers bivalent cations from the cytosol into these acidic compartments where they may directly affect antimicrobial activity. Involved in iron metabolism and host natural resistance to infection with intracellular parasites. Pathogen resistance involves sequestration of Fe(2+) and Mn(2+), cofactors of both prokaryotic and eukaryotic catalases and superoxide dismutases, not only to protect the macrophage against its own generation of reactive oxygen species, but to deny the cations to the pathogen for synthesis of its protective enzymes. The protein is Natural resistance-associated macrophage protein 1 (SLC11A1) of Bison bison (American bison).